Here is a 373-residue protein sequence, read N- to C-terminus: Dual-specificity RNA methyltransferase RlmN (373 aa).

E94 (proton acceptor) is an active-site residue. Positions 100–339 (EEDRATLCVS…VIVRKTRGDD (240 aa)) constitute a Radical SAM core domain. A disulfide bridge connects residues C107 and C344. Residues C114, C118, and C121 each contribute to the [4Fe-4S] cluster site. S-adenosyl-L-methionine contacts are provided by residues 168 to 169 (GE), S200, 222 to 224 (SIH), and N301. The active-site S-methylcysteine intermediate is C344.

It belongs to the radical SAM superfamily. RlmN family. The cofactor is [4Fe-4S] cluster.

It localises to the cytoplasm. The catalysed reaction is adenosine(2503) in 23S rRNA + 2 reduced [2Fe-2S]-[ferredoxin] + 2 S-adenosyl-L-methionine = 2-methyladenosine(2503) in 23S rRNA + 5'-deoxyadenosine + L-methionine + 2 oxidized [2Fe-2S]-[ferredoxin] + S-adenosyl-L-homocysteine. It carries out the reaction adenosine(37) in tRNA + 2 reduced [2Fe-2S]-[ferredoxin] + 2 S-adenosyl-L-methionine = 2-methyladenosine(37) in tRNA + 5'-deoxyadenosine + L-methionine + 2 oxidized [2Fe-2S]-[ferredoxin] + S-adenosyl-L-homocysteine. Functionally, specifically methylates position 2 of adenine 2503 in 23S rRNA and position 2 of adenine 37 in tRNAs. m2A2503 modification seems to play a crucial role in the proofreading step occurring at the peptidyl transferase center and thus would serve to optimize ribosomal fidelity. The chain is Dual-specificity RNA methyltransferase RlmN from Shewanella frigidimarina (strain NCIMB 400).